The primary structure comprises 782 residues: HHIP-like protein 1 (782 aa).

The N-terminal stretch at 1–19 is a signal peptide; that stretch reads MARARAGALLALWVLGAAA. Disulfide bonds link C181-C521, C185-C528, C399-C417, and C484-C584. N234 carries an N-linked (GlcNAc...) asparagine glycan. The segment at 604-666 is disordered; it reads EKFIPKTRST…RRGRLNSASR (63 aa). Residues 610-623 show a composition bias toward low complexity; that stretch reads TRSTPRPTARAPTR. The segment covering 632–642 has biased composition (pro residues); that stretch reads AAPPAPTPRPA. In terms of domain architecture, SRCR spans 673–776; the sequence is VRLVRPAGLS…HDEDAGVVCS (104 aa). 3 cysteine pairs are disulfide-bonded: C700–C765, C713–C775, and C745–C755.

Belongs to the HHIP family.

The protein localises to the secreted. In Homo sapiens (Human), this protein is HHIP-like protein 1 (HHIPL1).